The sequence spans 70 residues: Turripeptide Gsp9.3 (70 aa).

The first 20 residues, 1 to 20 (MKVYCLLLVLLVGLVSQAHG), serve as a signal peptide directing secretion. The Kazal-like domain occupies 21-70 (QLDKKCQMVCTFDYRPVCGSDGRTYPNKCTLTSTACMSQRSITVFHDGEC). 3 disulfide bridges follow: Cys-26–Cys-56, Cys-30–Cys-49, and Cys-38–Cys-70.

Belongs to the conopeptide P-like superfamily. As to expression, expressed by the venom duct.

The protein localises to the secreted. Functionally, acts as a neurotoxin by inhibiting an ion channel. May also act as a serine protease inhibitor, since it possess the kazal serine protease inhibitor signature. The chain is Turripeptide Gsp9.3 from Gemmula speciosa (Splendid gem-turris).